The primary structure comprises 842 residues: Serine/threonine-protein phosphatase 4 regulatory subunit 3 (842 aa).

In terms of assembly, regulatory subunit 3 (R3) of the histone H2A phosphatase complex (HTP-C) consisting of PPH3, PSY2 and PSY4.

It localises to the nucleus. In terms of biological role, core regulatory subunit of the histone H2A phosphatase complex, which dephosphorylates H2AS128ph (gamma-H2A) that has been displaced from sites of DNA lesions in the double-stranded DNA break repair process. Dephosphorylation is necessary for efficient recovery from the DNA damage checkpoint. This Candida glabrata (strain ATCC 2001 / BCRC 20586 / JCM 3761 / NBRC 0622 / NRRL Y-65 / CBS 138) (Yeast) protein is Serine/threonine-protein phosphatase 4 regulatory subunit 3 (PSY2).